The sequence spans 199 residues: Recombination protein RecR (199 aa).

The C4-type zinc-finger motif lies at cysteine 58–cysteine 73. Positions alanine 81 to proline 176 constitute a Toprim domain.

It belongs to the RecR family.

In terms of biological role, may play a role in DNA repair. It seems to be involved in an RecBC-independent recombinational process of DNA repair. It may act with RecF and RecO. The sequence is that of Recombination protein RecR from Azoarcus sp. (strain BH72).